The chain runs to 212 residues: Pyridoxine/pyridoxamine 5'-phosphate oxidase 1 (212 aa).

Residues 8 to 11 and Lys-66 contribute to the substrate site; that span reads RTDY. FMN contacts are provided by residues 61–66, 76–77, Lys-83, and Gln-105; these read RIVLLK and FT. 3 residues coordinate substrate: Tyr-123, Arg-127, and Ser-131. FMN is bound by residues 140–141 and Trp-184; that span reads QS. Residue 190–192 coordinates substrate; sequence RLH. Arg-194 contributes to the FMN binding site.

The protein belongs to the pyridoxamine 5'-phosphate oxidase family. As to quaternary structure, homodimer. The cofactor is FMN.

The enzyme catalyses pyridoxamine 5'-phosphate + O2 + H2O = pyridoxal 5'-phosphate + H2O2 + NH4(+). It carries out the reaction pyridoxine 5'-phosphate + O2 = pyridoxal 5'-phosphate + H2O2. Its pathway is cofactor metabolism; pyridoxal 5'-phosphate salvage; pyridoxal 5'-phosphate from pyridoxamine 5'-phosphate: step 1/1. The protein operates within cofactor metabolism; pyridoxal 5'-phosphate salvage; pyridoxal 5'-phosphate from pyridoxine 5'-phosphate: step 1/1. In terms of biological role, catalyzes the oxidation of either pyridoxine 5'-phosphate (PNP) or pyridoxamine 5'-phosphate (PMP) into pyridoxal 5'-phosphate (PLP). This chain is Pyridoxine/pyridoxamine 5'-phosphate oxidase 1, found in Ralstonia nicotianae (strain ATCC BAA-1114 / GMI1000) (Ralstonia solanacearum).